Reading from the N-terminus, the 177-residue chain is Keratin-associated protein 1-1 (177 aa).

The protein belongs to the KRTAP type 1 family. As to quaternary structure, interacts with hair keratins. Expressed in the middle/upper portions of the hair cortex, in the region termed the keratogenous zone.

Functionally, in the hair cortex, hair keratin intermediate filaments are embedded in an interfilamentous matrix, consisting of hair keratin-associated proteins (KRTAP), which are essential for the formation of a rigid and resistant hair shaft through their extensive disulfide bond cross-linking with abundant cysteine residues of hair keratins. The matrix proteins include the high-sulfur and high-glycine-tyrosine keratins. This Homo sapiens (Human) protein is Keratin-associated protein 1-1 (KRTAP1-1).